The chain runs to 66 residues: Large ribosomal subunit protein bL31 (66 aa).

Zn(2+)-binding residues include Cys16, Cys18, Cys36, and Cys39.

Belongs to the bacterial ribosomal protein bL31 family. Type A subfamily. In terms of assembly, part of the 50S ribosomal subunit. Zn(2+) is required as a cofactor.

In terms of biological role, binds the 23S rRNA. The polypeptide is Large ribosomal subunit protein bL31 (Leptospira biflexa serovar Patoc (strain Patoc 1 / Ames)).